A 209-amino-acid chain; its full sequence is Large ribosomal subunit protein uL3 (209 aa).

Position 150 is an N5-methylglutamine (Gln-150).

It belongs to the universal ribosomal protein uL3 family. As to quaternary structure, part of the 50S ribosomal subunit. Forms a cluster with proteins L14 and L19. Methylated by PrmB.

In terms of biological role, one of the primary rRNA binding proteins, it binds directly near the 3'-end of the 23S rRNA, where it nucleates assembly of the 50S subunit. The protein is Large ribosomal subunit protein uL3 of Cronobacter sakazakii (strain ATCC BAA-894) (Enterobacter sakazakii).